The sequence spans 472 residues: Serine incorporator 3 (472 aa).

The Extracellular segment spans residues Met1–Lys95. Residue Asn34 is glycosylated (N-linked (GlcNAc...) asparagine). The helical transmembrane segment at Ala96–Leu116 threads the bilayer. At Asn117–Gly131 the chain is on the cytoplasmic side. Residues Phe132–Gly152 traverse the membrane as a helical segment. The Extracellular segment spans residues Gly153 to Ala158. Residues Trp159–Val179 traverse the membrane as a helical segment. Residues Asp180–Tyr202 are Cytoplasmic-facing. The helical transmembrane segment at Ala203–Leu223 threads the bilayer. Over Tyr224–Phe238 the chain is Extracellular. Residues Phe239–Ile259 form a helical membrane-spanning segment. At Gln260–Ser328 the chain is on the cytoplasmic side. A helical membrane pass occupies residues Gly329–Tyr349. Topologically, residues Ser350–Ser405 are extracellular. N-linked (GlcNAc...) asparagine glycosylation is present at Asn354. A Phosphoserine modification is found at Ser370. N-linked (GlcNAc...) asparagine glycosylation occurs at Asn403. The chain crosses the membrane as a helical span at residues Met406–Tyr426. Residues Ser427–Lys445 are Cytoplasmic-facing. Residues Ile446–Leu466 form a helical membrane-spanning segment. The Extracellular segment spans residues Thr467 to Ser472.

This sequence belongs to the TDE1 family. In terms of processing, N-glycosylated.

It is found in the cell membrane. The protein localises to the golgi apparatus membrane. It carries out the reaction a 1,2-diacyl-sn-glycero-3-phospho-L-serine(in) = a 1,2-diacyl-sn-glycero-3-phospho-L-serine(out). The catalysed reaction is a 1,2-diacyl-sn-glycero-3-phosphocholine(in) = a 1,2-diacyl-sn-glycero-3-phosphocholine(out). The enzyme catalyses a 1,2-diacyl-sn-glycero-3-phosphoethanolamine(in) = a 1,2-diacyl-sn-glycero-3-phosphoethanolamine(out). Restriction factor required to restrict infectivity of gammaretroviruses: acts by inhibiting an early step of viral infection. Impairs the penetration of the viral particle into the cytoplasm. Non-ATP-dependent, non-specific lipid transporter for phosphatidylserine, phosphatidylcholine, and phosphatidylethanolamine. Functions as a scramblase that flips lipids in both directions across the membrane. Phospholipid scrambling results in gammaretroviral surface exposure of phosphatidylserine and loss of membrane asymmetry, which leads to loss of infectivity. In Bos taurus (Bovine), this protein is Serine incorporator 3 (SERINC3).